A 122-amino-acid polypeptide reads, in one-letter code: Large ribosomal subunit protein uL14 (122 aa).

It belongs to the universal ribosomal protein uL14 family. As to quaternary structure, part of the 50S ribosomal subunit. Forms a cluster with proteins L3 and L19. In the 70S ribosome, L14 and L19 interact and together make contacts with the 16S rRNA in bridges B5 and B8.

In terms of biological role, binds to 23S rRNA. Forms part of two intersubunit bridges in the 70S ribosome. The protein is Large ribosomal subunit protein uL14 of Polaromonas naphthalenivorans (strain CJ2).